The sequence spans 382 residues: S-adenosylmethionine synthase (382 aa).

Histidine 14 serves as a coordination point for ATP. Aspartate 16 provides a ligand contact to Mg(2+). Glutamate 42 serves as a coordination point for K(+). The L-methionine site is built by glutamate 55 and glutamine 91. The segment at 91–101 (QSENIAMGVNL) is flexible loop. Residues 156–158 (DMK), 222–223 (KF), aspartate 231, 237–238 (RK), alanine 254, and lysine 258 each bind ATP. Aspartate 231 is a binding site for L-methionine. Lysine 262 provides a ligand contact to L-methionine.

It belongs to the AdoMet synthase family. In terms of assembly, homotetramer; dimer of dimers. The cofactor is Mg(2+). It depends on K(+) as a cofactor.

The protein resides in the cytoplasm. It catalyses the reaction L-methionine + ATP + H2O = S-adenosyl-L-methionine + phosphate + diphosphate. It functions in the pathway amino-acid biosynthesis; S-adenosyl-L-methionine biosynthesis; S-adenosyl-L-methionine from L-methionine: step 1/1. In terms of biological role, catalyzes the formation of S-adenosylmethionine (AdoMet) from methionine and ATP. The overall synthetic reaction is composed of two sequential steps, AdoMet formation and the subsequent tripolyphosphate hydrolysis which occurs prior to release of AdoMet from the enzyme. The protein is S-adenosylmethionine synthase of Mycoplasmopsis synoviae (strain 53) (Mycoplasma synoviae).